The primary structure comprises 183 residues: Large ribosomal subunit protein uL6 (183 aa).

This sequence belongs to the universal ribosomal protein uL6 family. As to quaternary structure, part of the 50S ribosomal subunit.

This protein binds to the 23S rRNA, and is important in its secondary structure. It is located near the subunit interface in the base of the L7/L12 stalk, and near the tRNA binding site of the peptidyltransferase center. This chain is Large ribosomal subunit protein uL6, found in Chlamydia abortus (strain DSM 27085 / S26/3) (Chlamydophila abortus).